A 319-amino-acid chain; its full sequence is Aliphatic sulfonates import ATP-binding protein SsuB 1 (319 aa).

Residues 63 to 282 (VTLSGVSKRF…ARASAAFAAL (220 aa)) enclose the ABC transporter domain. Residue 95-102 (GRSGCGKS) participates in ATP binding.

This sequence belongs to the ABC transporter superfamily. Aliphatic sulfonates importer (TC 3.A.1.17.2) family. In terms of assembly, the complex is composed of two ATP-binding proteins (SsuB), two transmembrane proteins (SsuC) and a solute-binding protein (SsuA).

The protein resides in the cell inner membrane. The enzyme catalyses ATP + H2O + aliphatic sulfonate-[sulfonate-binding protein]Side 1 = ADP + phosphate + aliphatic sulfonateSide 2 + [sulfonate-binding protein]Side 1.. In terms of biological role, part of the ABC transporter complex SsuABC involved in aliphatic sulfonates import. Responsible for energy coupling to the transport system. The sequence is that of Aliphatic sulfonates import ATP-binding protein SsuB 1 from Burkholderia lata (strain ATCC 17760 / DSM 23089 / LMG 22485 / NCIMB 9086 / R18194 / 383).